Consider the following 168-residue polypeptide: ATP synthase subunit b (168 aa).

A helical membrane pass occupies residues 13 to 33 (WTFLFQTLNLLVVMGLLYVFL).

Belongs to the ATPase B chain family. F-type ATPases have 2 components, F(1) - the catalytic core - and F(0) - the membrane proton channel. F(1) has five subunits: alpha(3), beta(3), gamma(1), delta(1), epsilon(1). F(0) has three main subunits: a(1), b(2) and c(10-14). The alpha and beta chains form an alternating ring which encloses part of the gamma chain. F(1) is attached to F(0) by a central stalk formed by the gamma and epsilon chains, while a peripheral stalk is formed by the delta and b chains.

Its subcellular location is the cell membrane. F(1)F(0) ATP synthase produces ATP from ADP in the presence of a proton or sodium gradient. F-type ATPases consist of two structural domains, F(1) containing the extramembraneous catalytic core and F(0) containing the membrane proton channel, linked together by a central stalk and a peripheral stalk. During catalysis, ATP synthesis in the catalytic domain of F(1) is coupled via a rotary mechanism of the central stalk subunits to proton translocation. Its function is as follows. Component of the F(0) channel, it forms part of the peripheral stalk, linking F(1) to F(0). The protein is ATP synthase subunit b of Moorella thermoacetica (strain ATCC 39073 / JCM 9320).